The chain runs to 236 residues: V-set and transmembrane domain-containing protein 2A (236 aa).

The N-terminal stretch at 1–24 (MMGIFLVYVGFVFFSVLYVQQGLS) is a signal peptide. The 117-residue stretch at 27–143 (AKFTEFPRNV…YGELQEHKAQ (117 aa)) folds into the Ig-like V-type domain. N-linked (GlcNAc...) asparagine glycosylation occurs at N35. A disulfide bridge links C48 with C127. A glycan (N-linked (GlcNAc...) asparagine) is linked at N175. Residues 184–199 (IHGSANQRTHSTSSPQ) are compositionally biased toward polar residues. Positions 184–206 (IHGSANQRTHSTSSPQVVAKIPK) are disordered.

In terms of assembly, homodimer. Post-translationally, N-glycosylated. N-linked glycosylation is critical for secretion but not for preadipocyte cell differentiation activity.

Its subcellular location is the secreted. Functionally, plays a role in the regulation of the early stage of white and brown preadipocyte cell differentiation. Promotes adipogenic commitment of preadipocytes by increasing gene expression of the transcription factor PPARG in a BMP4-dependent signaling pathway. The polypeptide is V-set and transmembrane domain-containing protein 2A (Homo sapiens (Human)).